Consider the following 501-residue polypeptide: Glycoprotein 3-alpha-L-fucosyltransferase A (501 aa).

Residues 1–39 (MGVFSNLRGPKIGLTHEELPVVANGSTSSSSSPSSFKRK) are Cytoplasmic-facing. Residues 40-60 (VSTFLPICVALVVIIEIGFLC) form a helical; Signal-anchor for type II membrane protein membrane-spanning segment. The Lumenal segment spans residues 61–501 (RLDNASLVDT…PCPKFEVVFV (441 aa)). 4 N-linked (GlcNAc...) asparagine glycosylation sites follow: Asn-64, Asn-337, Asn-420, and Asn-481.

It belongs to the glycosyltransferase 10 family. Mg(2+) serves as cofactor. The cofactor is Mn(2+). Glycosylation may be important for enzymatic activity.

It is found in the golgi apparatus. It localises to the golgi stack membrane. It catalyses the reaction N(4)-{beta-D-GlcNAc-(1-&gt;2)-alpha-D-Man-(1-&gt;3)-[beta-D-GlcNAc-(1-&gt;2)-alpha-D-Man-(1-&gt;6)]-beta-D-Man-(1-&gt;4)-beta-D-GlcNAc-(1-&gt;4)-beta-D-GlcNAc}-L-asparaginyl-[protein] + GDP-beta-L-fucose = N(4)-{beta-D-GlcNAc-(1-&gt;2)-alpha-D-Man-(1-&gt;3)-[beta-D-GlcNAc-(1-&gt;2)-alpha-D-Man-(1-&gt;6)]-beta-D-Man-(1-&gt;4)-beta-D-GlcNAc-(1-&gt;4)-[alpha-L-Fuc(1-&gt;3)]-beta-D-GlcNAc}-L-asparaginyl-[protein] + GDP + H(+). Its pathway is protein modification; protein glycosylation. Inhibited by Cu(2+) and Zn(2+). Its function is as follows. Involved in cell wall synthesis. Preferentially catalyzes the addition of fucose in alpha 1-3 linkage to the first GlcNAc residue next to the peptide chains in N-glycans. The protein is Glycoprotein 3-alpha-L-fucosyltransferase A (FUT11) of Arabidopsis thaliana (Mouse-ear cress).